Reading from the N-terminus, the 103-residue chain is Small ribosomal subunit protein uS10 (103 aa).

It belongs to the universal ribosomal protein uS10 family. As to quaternary structure, part of the 30S ribosomal subunit.

Its function is as follows. Involved in the binding of tRNA to the ribosomes. This chain is Small ribosomal subunit protein uS10, found in Polynucleobacter asymbioticus (strain DSM 18221 / CIP 109841 / QLW-P1DMWA-1) (Polynucleobacter necessarius subsp. asymbioticus).